The chain runs to 429 residues: 3-phosphoshikimate 1-carboxyvinyltransferase (429 aa).

Lys-20, Ser-21, and Arg-25 together coordinate 3-phosphoshikimate. A phosphoenolpyruvate-binding site is contributed by Lys-20. Phosphoenolpyruvate-binding residues include Gly-89 and Arg-118. 3-phosphoshikimate-binding residues include Ser-164, Ser-165, Gln-166, Ser-192, Asp-311, and Lys-338. Residue Gln-166 participates in phosphoenolpyruvate binding. The Proton acceptor role is filled by Asp-311. Phosphoenolpyruvate contacts are provided by Arg-342 and Arg-384.

The protein belongs to the EPSP synthase family. As to quaternary structure, monomer.

It localises to the cytoplasm. The catalysed reaction is 3-phosphoshikimate + phosphoenolpyruvate = 5-O-(1-carboxyvinyl)-3-phosphoshikimate + phosphate. The protein operates within metabolic intermediate biosynthesis; chorismate biosynthesis. Catalyzes the transfer of the enolpyruvyl moiety of phosphoenolpyruvate (PEP) to the 5-hydroxyl of shikimate-3-phosphate (S3P) to produce enolpyruvyl shikimate-3-phosphate and inorganic phosphate. This chain is 3-phosphoshikimate 1-carboxyvinyltransferase, found in Methanococcus maripaludis (strain C5 / ATCC BAA-1333).